The chain runs to 389 residues: S-adenosylmethionine synthase (389 aa).

Residue His-15 coordinates ATP. Residue Asp-17 coordinates Mg(2+). Glu-43 is a K(+) binding site. The L-methionine site is built by Glu-56 and Gln-99. A flexible loop region spans residues 99 to 109 (QSSDIQYSIDH). Residues 166 to 168 (DAK), 232 to 233 (RF), Asp-241, 247 to 248 (RK), Ser-264, and Lys-268 each bind ATP. Asp-241 provides a ligand contact to L-methionine. Residue Lys-272 participates in L-methionine binding.

Belongs to the AdoMet synthase family. In terms of assembly, homotetramer; dimer of dimers. Mg(2+) is required as a cofactor. The cofactor is K(+).

The protein localises to the cytoplasm. It catalyses the reaction L-methionine + ATP + H2O = S-adenosyl-L-methionine + phosphate + diphosphate. The protein operates within amino-acid biosynthesis; S-adenosyl-L-methionine biosynthesis; S-adenosyl-L-methionine from L-methionine: step 1/1. Its function is as follows. Catalyzes the formation of S-adenosylmethionine (AdoMet) from methionine and ATP. The overall synthetic reaction is composed of two sequential steps, AdoMet formation and the subsequent tripolyphosphate hydrolysis which occurs prior to release of AdoMet from the enzyme. In Blochmanniella pennsylvanica (strain BPEN), this protein is S-adenosylmethionine synthase.